The primary structure comprises 137 residues: Nucleoside diphosphate kinase (137 aa).

6 residues coordinate ATP: K9, F58, R86, T92, R103, and N113. H121 serves as the catalytic Pros-phosphohistidine intermediate.

Belongs to the NDK family. In terms of assembly, homotetramer. The cofactor is Mg(2+).

The protein resides in the cytoplasm. The catalysed reaction is a 2'-deoxyribonucleoside 5'-diphosphate + ATP = a 2'-deoxyribonucleoside 5'-triphosphate + ADP. The enzyme catalyses a ribonucleoside 5'-diphosphate + ATP = a ribonucleoside 5'-triphosphate + ADP. Functionally, major role in the synthesis of nucleoside triphosphates other than ATP. The ATP gamma phosphate is transferred to the NDP beta phosphate via a ping-pong mechanism, using a phosphorylated active-site intermediate. This Streptococcus pneumoniae (strain P1031) protein is Nucleoside diphosphate kinase.